The chain runs to 718 residues: Cyclomaltodextrin glucanotransferase (718 aa).

Residues 1–34 form the signal peptide; that stretch reads MFQMAKRAFLSTTLTLGLLAGSALPFLPASAAYA. Residues 35–172 are A1; that stretch reads DPDIAVTNKQ…GIKIIIDFAP (138 aa). The Ca(2+) site is built by Asp61, Asn63, Asn66, and Asn67. Cys77 and Cys84 are disulfide-bonded. The Ca(2+) site is built by Gly85 and Asp87. 134 to 135 contributes to the substrate binding site; that stretch reads YW. Asn173 contributes to the Ca(2+) binding site. Residues 173–236 are b; the sequence is NHTSPAMETD…NLYDLADFNH (64 aa). Substrate is bound at residue His174. Residue Ile224 coordinates Ca(2+). 227–230 serves as a coordination point for substrate; the sequence is NLYD. Asp233 contributes to the Ca(2+) binding site. Residues 237–440 are A2; sequence NNATIDKYFK…LRKSNPAIAY (204 aa). Arg261 is a substrate binding site. Asp263 serves as the catalytic Nucleophile. 266–267 provides a ligand contact to substrate; the sequence is KH. His267 provides a ligand contact to Ca(2+). Catalysis depends on Glu291, which acts as the Proton donor. Residues His361, Asp405, and Arg409 each coordinate substrate. The tract at residues 441-528 is c; the sequence is GSTQQRWINN…ATAVWQYTAA (88 aa). Residues 529 to 614 are d; it reads ETTPTIGHVG…SNAYNHFTIL (86 aa). The 81-residue stretch at 532–612 folds into the IPT/TIG domain; that stretch reads PTIGHVGPVM…VNSNAYNHFT (81 aa). The CBM20 domain occupies 613 to 718; the sequence is ILTGDQVTVR…GTATVTVNWQ (106 aa). Residues 615–718 are e; it reads TGDQVTVRFV…GTATVTVNWQ (104 aa).

It belongs to the glycosyl hydrolase 13 family. As to quaternary structure, monomer. Requires Ca(2+) as cofactor.

It localises to the secreted. It catalyses the reaction Cyclizes part of a (1-&gt;4)-alpha-D-glucan chain by formation of a (1-&gt;4)-alpha-D-glucosidic bond.. The chain is Cyclomaltodextrin glucanotransferase (cgt) from Bacillus sp. (strain 6.6.3).